A 642-amino-acid chain; its full sequence is Rhotekin-2 (642 aa).

In terms of domain architecture, REM-1 spans 30 to 105 (IKRKKIRESM…AQKRTGHQDF (76 aa)). The PH domain maps to 306 to 413 (LDMMSGFLSQ…WLDSLWQHIY (108 aa)). 2 disordered regions span residues 505–563 (TVLS…GRPS) and 575–642 (LQKS…PKAW). 2 stretches are compositionally biased toward basic and acidic residues: residues 597-615 (PEKRAEESDLPEYTKKEYI) and 632-642 (SFREKMNPKAW).

This Danio rerio (Zebrafish) protein is Rhotekin-2 (rtkn2).